The sequence spans 374 residues: MKRQRVVVKIGSSSLTDPKGGLCHDKLLDHVQAIAYMKQLGHDIILITSGAVAAGFGPLGYPTRPTTIAGKQAAAAVGQSLLMQAYSAQFAQFGFTAAQLLLTRSDFYSRERFRNLFATITTLLEHGAVPIINENDSVSVEELTFGDNDMLSALVAGFLHADALVLLTDINGLYDANPKTNPQAKKYAFLPEITSEMLASAGGSGSTVGTGGMRSKLLAAQKALSFGVSVFIGTGSGKEKLADILAGKGDGTYIGVPFPKQMQMRKQWIAYHAPVSGTITVDSGAEEALLDRGKSLLPAGVTAVSGDFHAMDVVNVINEKGVTIGRGQVYYAAADLKKVKGRPSEEARQYSYLHRPEVIHRDNWVTLRKERVKR.

Lysine 9 serves as a coordination point for ATP. Substrate-binding residues include serine 49, aspartate 136, and asparagine 148. ATP-binding positions include 168 to 169 and 210 to 216; these read TD and TGGMRSK. The PUA domain maps to 276–354; sequence SGTITVDSGA…EEARQYSYLH (79 aa).

Belongs to the glutamate 5-kinase family.

Its subcellular location is the cytoplasm. It carries out the reaction L-glutamate + ATP = L-glutamyl 5-phosphate + ADP. It participates in amino-acid biosynthesis; L-proline biosynthesis; L-glutamate 5-semialdehyde from L-glutamate: step 1/2. Catalyzes the transfer of a phosphate group to glutamate to form L-glutamate 5-phosphate. This Geobacillus thermodenitrificans (strain NG80-2) protein is Glutamate 5-kinase.